Consider the following 487-residue polypeptide: Zinc finger and BTB domain-containing protein 32 (487 aa).

The BTB domain maps to 29–87; sequence CDTLITVGGQEFPAHSLVLAGVSQQLGRRGQWALGEGISPSTFAQLLNFVYGESVELQP. A compositionally biased stretch (basic and acidic residues) spans 113–166; sequence RGDRAKKPDPGLKKHQEEPEKPSRNAERELGDPGEKQKPEQVSRTGGREQEMLH. Disordered stretches follow at residues 113–208 and 308–371; these read RGDR…ADGK and QNQL…ARSR. Positions 308 to 320 are enriched in polar residues; the sequence is QNQLASSSPTPGS. Residues 357 to 369 are compositionally biased toward pro residues; that stretch reads PPRPHPPPAPPAR. 3 C2H2-type zinc fingers span residues 373–395, 401–423, and 428–450; these read YACS…YRVH, FSCS…LRTH, and YRXX…MRGH. Positions 468–487 are disordered; that stretch reads SSSRPSRPSTSPCCPSSSTT.

Belongs to the krueppel C2H2-type zinc-finger protein family. Homodimer (via PTB domain). Interacts with the N-terminal of FANCC. Interacts with ZBTB16. Interacts with GATA3.

It localises to the nucleus. Functionally, DNA-binding protein that binds to the to a 5'-TGTACAGTGT-3' core sequence. May function as a transcriptional transactivator and transcriptional repressor. Probably exerts its repressor effect by preventing GATA3 from binding to DNA. May play a role in regulating the differentiation and activation of helper T-cells. This Pan troglodytes (Chimpanzee) protein is Zinc finger and BTB domain-containing protein 32 (ZBTB32).